The following is a 134-amino-acid chain: ATP synthase epsilon chain (134 aa).

Belongs to the ATPase epsilon chain family. F-type ATPases have 2 components, CF(1) - the catalytic core - and CF(0) - the membrane proton channel. CF(1) has five subunits: alpha(3), beta(3), gamma(1), delta(1), epsilon(1). CF(0) has three main subunits: a, b and c.

The protein localises to the cell membrane. In terms of biological role, produces ATP from ADP in the presence of a proton gradient across the membrane. The chain is ATP synthase epsilon chain from Listeria innocua serovar 6a (strain ATCC BAA-680 / CLIP 11262).